A 531-amino-acid polypeptide reads, in one-letter code: Zinc finger C2HC domain-containing protein 1C (531 aa).

A disordered region spans residues 16–45 (MLPHNTTEAPGPHSAKQDSYEQSDSSQQSL). Residues 35–44 (YEQSDSSQQS) show a composition bias toward low complexity. Positions 209–264 (VQIRRLEAAGESLEEEIRRKQILLRGKLKKTEEELRRIQTQKEQAKENENRELQKI) form a coiled coil. Disordered stretches follow at residues 290 to 318 (FEEEFSRDKREDETWERSQQNSSPFQLSD) and 334 to 387 (NKIR…PQLG). Residues 293–305 (EFSRDKREDETWE) are compositionally biased toward basic and acidic residues. The span at 306-315 (RSQQNSSPFQ) shows a compositional bias: polar residues. The span at 335 to 345 (KIRDRVSEPSM) shows a compositional bias: basic and acidic residues. Residues 366–380 (SSLSMAPDSSGSSGS) are compositionally biased toward low complexity. 2 C2HC/C3H-type zinc fingers span residues 385–414 (QLGECSHCGRKFLLFRLERHSNICSRMQGS) and 493–522 (DYIQCPHCSHHFAPKVAEQHIPKCKTIKNR). Zn(2+)-binding residues include cysteine 389, cysteine 392, histidine 404, cysteine 408, cysteine 497, cysteine 500, histidine 512, and cysteine 516.

The protein belongs to the ZC2HC1 family. It depends on Zn(2+) as a cofactor.

The chain is Zinc finger C2HC domain-containing protein 1C (ZC2HC1C) from Macaca fascicularis (Crab-eating macaque).